The following is a 363-amino-acid chain: Zinc finger protein 830 (363 aa).

Ala-2 carries the post-translational modification N-acetylalanine. Positions 16-40 (VNQEELRRLMREKQRLSTNRKRIES) form a coiled coil. The segment at 53–75 (CALCNTPVKSELLWQTHVLGKQH) adopts a C2H2-type zinc-finger fold. The disordered stretch occupies residues 81–213 (ELKGAKGATQ…NPPKAPLVPH (133 aa)). The segment covering 90–99 (QGPSTGTVPQ) has biased composition (polar residues). A compositionally biased stretch (basic and acidic residues) spans 104–115 (RATDVESQDAKK). The segment covering 129 to 143 (SASSANLDAARAAPS) has biased composition (low complexity). Over residues 152–164 (DYDDEEEEEEEGG) the composition is skewed to acidic residues. The span at 165-184 (GEERRDSSKHLPDAQGKEHS) shows a compositional bias: basic and acidic residues. Polar residues predominate over residues 189-205 (RETTSNVLPNDPFNTNP). Position 216 is a phosphoserine (Ser-216). Residues 303–331 (IECYRRVEKLRNRQDEIKNKLKEVLTIKE) adopt a coiled-coil conformation. 2 positions are modified to phosphoserine: Ser-342 and Ser-353.

Component of the XAB2 complex, a multimeric protein complex composed of XAB2, PRPF19, AQR, ZNF830, ISY1, and PPIE; this complex binds preferentially to RNA. Interacts with XAB2. Identified in a pentameric intron-binding (IB) complex composed of AQR, XAB2, ISY1, ZNF830 and PPIE that is incorporated into the spliceosome as a preassembled complex. The IB complex does not contain PRPF19. Post-translationally, phosphorylated in response to DNA damage by the cell cycle checkpoint kinases ATR/ATM. In terms of tissue distribution, widely expressed at low level. Expressed in oocytes from primordial to antral follicles. Also detected in somatic cells of the ovary, namely, in granulosa cells from the pre-antral follicle stage onward.

The protein resides in the nucleus. It is found in the chromosome. Its subcellular location is the nucleus speckle. Its function is as follows. May play a role in pre-mRNA splicing as component of the spliceosome. Acts as an important regulator of the cell cycle that participates in the maintenance of genome integrity. During cell cycle progression in embryonic fibroblast, prevents replication fork collapse, double-strand break formation and cell cycle checkpoint activation. Controls mitotic cell cycle progression and cell survival in rapidly proliferating intestinal epithelium and embryonic stem cells. During the embryo preimplantation, controls different aspects of M phase. During early oocyte growth, plays a role in oocyte survival by preventing chromosomal breaks formation, activation of TP63 and reduction of transcription. The chain is Zinc finger protein 830 from Mus musculus (Mouse).